The primary structure comprises 271 residues: MRASSHLPQLHGRLDLTFERRRGTTRLVASEQTPPLNVSRVLRTEEVDLATVYLVETSGGVVSGDSQTIAIYVGEGARVELIPQSATKVYPSRKQGESSTQQVWLRVDEGAAAFWKPESIIPFRKASFLQSTRFHLHSSSTFFYGDMLTPGRVHHNERFQYEQVDSLVEIYLDETLVVHDRVHLQPKDQLQTIGRLDGYSYYGAVWMHAPILKGAHLEQWMENGGQNDRFAYTCVAEGLIHVRWLSESSWRLRAALNDLYTAFRTFALKGE.

The protein belongs to the UreD family. As to quaternary structure, ureD, UreF and UreG form a complex that acts as a GTP-hydrolysis-dependent molecular chaperone, activating the urease apoprotein by helping to assemble the nickel containing metallocenter of UreC. The UreE protein probably delivers the nickel.

The protein resides in the cytoplasm. In terms of biological role, required for maturation of urease via the functional incorporation of the urease nickel metallocenter. The chain is Urease accessory protein UreD from Halalkalibacterium halodurans (strain ATCC BAA-125 / DSM 18197 / FERM 7344 / JCM 9153 / C-125) (Bacillus halodurans).